The following is a 301-amino-acid chain: Sulfate adenylyltransferase subunit 2 (301 aa).

It belongs to the PAPS reductase family. CysD subfamily. In terms of assembly, heterodimer composed of CysD, the smaller subunit, and CysN.

It carries out the reaction sulfate + ATP + H(+) = adenosine 5'-phosphosulfate + diphosphate. It participates in sulfur metabolism; hydrogen sulfide biosynthesis; sulfite from sulfate: step 1/3. With CysN forms the ATP sulfurylase (ATPS) that catalyzes the adenylation of sulfate producing adenosine 5'-phosphosulfate (APS) and diphosphate, the first enzymatic step in sulfur assimilation pathway. APS synthesis involves the formation of a high-energy phosphoric-sulfuric acid anhydride bond driven by GTP hydrolysis by CysN coupled to ATP hydrolysis by CysD. This Citrifermentans bemidjiense (strain ATCC BAA-1014 / DSM 16622 / JCM 12645 / Bem) (Geobacter bemidjiensis) protein is Sulfate adenylyltransferase subunit 2.